The chain runs to 231 residues: 7-cyano-7-deazaguanine synthase (231 aa).

8-18 (FSGGQDSTTCL) provides a ligand contact to ATP. Zn(2+)-binding residues include C188, C197, C200, and C203.

It belongs to the QueC family. It depends on Zn(2+) as a cofactor.

The catalysed reaction is 7-carboxy-7-deazaguanine + NH4(+) + ATP = 7-cyano-7-deazaguanine + ADP + phosphate + H2O + H(+). It participates in purine metabolism; 7-cyano-7-deazaguanine biosynthesis. Catalyzes the ATP-dependent conversion of 7-carboxy-7-deazaguanine (CDG) to 7-cyano-7-deazaguanine (preQ(0)). The sequence is that of 7-cyano-7-deazaguanine synthase from Salmonella choleraesuis (strain SC-B67).